Here is a 1505-residue protein sequence, read N- to C-terminus: Phosphatidylinositol 3-kinase C2 domain-containing subunit gamma (1505 aa).

Residues 1–32 are disordered; it reads MAYNWQTEPNRAEPQEGGHDHQQCHHADQHLS. Residues 10–31 are compositionally biased toward basic and acidic residues; sequence NRAEPQEGGHDHQQCHHADQHL. The region spanning 278 to 370 is the PI3K-RBD domain; it reads PSRLFADTQF…IQLHLQRSRD (93 aa). The 149-residue stretch at 540–688 folds into the C2 PI3K-type domain; the sequence is LHSHLSFTVC…TPLTLQIDFP (149 aa). The PIK helical domain maps to 703 to 879; it reads RTDHQEPPRE…QELLAALQFC (177 aa). Residues 948–1226 form the PI3K/PI4K catalytic domain; sequence DRDACSYFTS…KIKQSLECFP (279 aa). Residues 954 to 960 are G-loop; it reads YFTSNAL. A catalytic loop region spans residues 1090-1098; the sequence is GVCDRHNDN. The activation loop stretch occupies residues 1109-1135; the sequence is HIDFGKFLGHAQTFGGIKRDRAPFIFT. In terms of domain architecture, PX spans 1259-1371; that stretch reads LNKTRTIQRV…SFFLSEHIQQ (113 aa). One can recognise a C2 domain in the interval 1384–1505; the sequence is HSPDKSPQVQ…KWYPLGNSII (122 aa).

Belongs to the PI3/PI4-kinase family. In terms of tissue distribution, predominantly expressed in normal liver. High levels also found in regenerating liver. Very low levels found in heart and testis.

It is found in the membrane. It carries out the reaction a 1,2-diacyl-sn-glycero-3-phospho-(1D-myo-inositol) + ATP = a 1,2-diacyl-sn-glycero-3-phospho-(1D-myo-inositol-3-phosphate) + ADP + H(+). The enzyme catalyses a 1,2-diacyl-sn-glycero-3-phospho-(1D-myo-inositol 4-phosphate) + ATP = a 1,2-diacyl-sn-glycero-3-phospho-(1D-myo-inositol-3,4-bisphosphate) + ADP + H(+). In terms of biological role, generates phosphatidylinositol 3-phosphate (PtdIns3P) and phosphatidylinositol 3,4-bisphosphate (PtdIns(3,4)P2) that act as second messengers. May play a role in SDF1A-stimulated chemotaxis. In Rattus norvegicus (Rat), this protein is Phosphatidylinositol 3-kinase C2 domain-containing subunit gamma (Pik3c2g).